A 1038-amino-acid chain; its full sequence is Fibronectin-binding protein A (1038 aa).

Residues 1–36 (MKNNLRYGIRKHKLGAASVFLGTMIVVGMGQDKEAA) form the signal peptide. The short motif at 7–18 (YGIRKHKLGAAS) is the YSIRK-G/S signaling motif element. Positions 37 to 193 (ASEQKTTTVE…VSEVKGTDVT (157 aa)) are disordered. The ligand-binding A region stretch occupies residues 37-507 (ASEQKTTTVE…SNKADGNGKN (471 aa)). Residues 39 to 92 (EQKTTTVEENGNSATDNKTSETQTTATNVNHIEETQSYNATVTEQPSNATQVTT) are compositionally biased toward polar residues. Residues 112 to 121 (TVKEEEKPQV) show a composition bias toward basic and acidic residues. Over residues 122–164 (KETTQPQDNSGNQRQVDLTPKKVTQNQGTETQVEVAQPRTASE) the composition is skewed to polar residues. Basic and acidic residues predominate over residues 174–189 (DVAEAKEASDVSEVKG). Residues 189-507 (GTDVTSKVTV…SNKADGNGKN (319 aa)) are fibrinogen/elastin/tropoelastin-binding. Residues 508–868 (GQIIQDNDFE…EGQQTIEEDT (361 aa)) are fibronectin-binding. Residues 541 to 570 (ENQDNTPLDIDYHTAIDGEGGYVDGYIETI) form a B-1 repeat. The tract at residues 541 to 600 (ENQDNTPLDIDYHTAIDGEGGYVDGYIETIEETDSSAIDIDYHTAVDSEVGHVGGYTESS) is 2 X approximate tandem repeats. Residues 571–600 (EETDSSAIDIDYHTAVDSEVGHVGGYTESS) form a B-2 repeat. Disordered stretches follow at residues 736-804 (LGYE…GGNI), 825-976 (IEED…GKVV), and 989-1015 (VAPT…NKGM). Residues 741 to 778 (GQNSGNQSFEEDTEEDKPKYEQGGNIVDIDFDSVPQIH) form a D-1 repeat. The segment at 741-898 (GQNSGNQSFE…TPEVPSEPET (158 aa)) is 4 X approximate tandem repeats. The D-2 repeat unit spans residues 779 to 816 (GQNKGDQSFEEDTEKDKPKYEHGGNIIDIDFDSVPQIH). One copy of the D-3 repeat lies at 817-855 (GFNKHNEIIEEDTNKDKPNYQFGGHNSVDFEEDTLPKVS). The span at 825–834 (IEEDTNKDKP) shows a compositional bias: basic and acidic residues. Residues 856–898 (GQNEGQQTIEEDTTPPTPPTPEVPSEPETPMPPTPEVPSEPET) form a D-4 repeat. A compositionally biased stretch (pro residues) spans 870-958 (PPTPPTPEVP…PAEPGKPVPP (89 aa)). 5 WR repeats span residues 899–912 (PTPP…EPET), 913–926 (PTPP…EPET), 927–940 (PTPP…EPET), 941–954 (PTPP…EPGK), and 955–968 (PVPP…KPSK). The 5 X tandem repeats, Pro-rich (WR) stretch occupies residues 899-968 (PTPPTPEVPS…AKEEPKKPSK (70 aa)). The LPXTG sorting signal motif lies at 1002–1006 (LPETG). Thr-1005 carries the post-translational modification Pentaglycyl murein peptidoglycan amidated threonine. A propeptide spans 1006 to 1038 (GGEESTNKGMLFGGLFSILGLALLRRNKKNNKA) (removed by sortase).

It localises to the secreted. The protein resides in the cell wall. Its function is as follows. Promotes bacterial attachment to multiple substrates, such as fibronectin (Fn), fibrinogen (Fg), elastin peptides and tropoelastin. This confers to S.aureus the ability to invade endothelial cells. Promotes adherence to and aggregation of activated platelets. The protein is Fibronectin-binding protein A (fnbA) of Staphylococcus aureus (strain Mu50 / ATCC 700699).